A 909-amino-acid polypeptide reads, in one-letter code: Lon protease homolog 2, peroxisomal (909 aa).

Positions 1 to 230 (MAPVRAPTAR…KVIELLDRQV (230 aa)) constitute a Lon N-terminal domain. Residues 249–269 (FPMDPDSTKPGKVKPPVKAPG) form a disordered region. 463–470 (GPPGVGKT) contacts ATP. The region spanning 706–893 (TSRPGIVTGL…WEAIRYVWPD (188 aa)) is the Lon proteolytic domain. Active-site residues include serine 799 and lysine 842. Positions 907–909 (SRL) match the Microbody targeting signal motif.

Belongs to the peptidase S16 family.

It localises to the peroxisome matrix. It is found in the cytoplasm. The catalysed reaction is Hydrolysis of proteins in presence of ATP.. Its function is as follows. ATP-dependent serine protease that mediates the selective degradation of misfolded and unassembled polypeptides in the peroxisomal matrix. Necessary for type 2 peroxisome targeting signal (PTS2)-containing protein processing and facilitates peroxisome matrix protein import. This is Lon protease homolog 2, peroxisomal from Sordaria macrospora (strain ATCC MYA-333 / DSM 997 / K(L3346) / K-hell).